Reading from the N-terminus, the 146-residue chain is ATP synthase epsilon chain (146 aa).

The tract at residues 103–124 (QAERELGQLPEEEDEDSRRARE) is disordered.

This sequence belongs to the ATPase epsilon chain family. In terms of assembly, F-type ATPases have 2 components, CF(1) - the catalytic core - and CF(0) - the membrane proton channel. CF(1) has five subunits: alpha(3), beta(3), gamma(1), delta(1), epsilon(1). CF(0) has three main subunits: a, b and c.

It is found in the cell membrane. Produces ATP from ADP in the presence of a proton gradient across the membrane. In Rubrobacter xylanophilus (strain DSM 9941 / JCM 11954 / NBRC 16129 / PRD-1), this protein is ATP synthase epsilon chain.